The following is a 92-amino-acid chain: Small ribosomal subunit protein uS19c (92 aa).

It belongs to the universal ribosomal protein uS19 family.

It localises to the plastid. Its subcellular location is the chloroplast. Protein S19 forms a complex with S13 that binds strongly to the 16S ribosomal RNA. This is Small ribosomal subunit protein uS19c (rps19) from Pinus thunbergii (Japanese black pine).